We begin with the raw amino-acid sequence, 212 residues long: Large ribosomal subunit protein uL3 (212 aa).

Glutamine 153 is modified (N5-methylglutamine).

This sequence belongs to the universal ribosomal protein uL3 family. Part of the 50S ribosomal subunit. Forms a cluster with proteins L14 and L19. Post-translationally, methylated by PrmB.

In terms of biological role, one of the primary rRNA binding proteins, it binds directly near the 3'-end of the 23S rRNA, where it nucleates assembly of the 50S subunit. This Azoarcus sp. (strain BH72) protein is Large ribosomal subunit protein uL3.